The sequence spans 553 residues: uncharacterized protein (553 aa).

The SWIB/MDM2 domain occupies 26–109 (RFEFVGWGSR…YDLLEKHYKE (84 aa)). The Plus3 domain maps to 150-275 (AIVSDNIKLL…KAKKLHKDQT (126 aa)). 2 disordered regions span residues 335–357 (QNPE…SESP) and 447–482 (PVNN…ETLD). The span at 343–353 (EAHKSDNEQRL) shows a compositional bias: basic and acidic residues. Polar residues predominate over residues 447–461 (PVNNVDNGSQVQPNP). The segment covering 466 to 480 (ELSDDDEDDNGDGET) has biased composition (acidic residues). Residues 497–551 (KLNWLYKDPQGLVQGPFSLTQLKAWSDAEYFTKQFRVWMTGESMESAVLLTDVLR) enclose the GYF domain.

This is an uncharacterized protein from Arabidopsis thaliana (Mouse-ear cress).